Reading from the N-terminus, the 430-residue chain is Putrescine 2-hydroxylase (430 aa).

One can recognise a Rieske domain in the interval 88–203; it reads LYVGHQKLVP…LRDCHGLLFE (116 aa). [2Fe-2S] cluster is bound by residues Cys128, His130, Cys162, and His165.

The protein belongs to the bacterial ring-hydroxylating dioxygenase alpha subunit family. [2Fe-2S] cluster serves as cofactor.

Functionally, rieske-type iron sulfur protein that can catalyze in vitro the 2-hydroxylation of putrescine, forming 2-hydroxyputrescine. May be involved in the biosynthesis of the cyclic hydroxamate siderophore alcaligin. The polypeptide is Putrescine 2-hydroxylase (Bordetella bronchiseptica (strain ATCC BAA-588 / NCTC 13252 / RB50) (Alcaligenes bronchisepticus)).